The sequence spans 206 residues: MLDKLIIEFDKGLRTVFAPAQTLRPHPDTGLEEAGLSDLEKRHALGLMRVNHCGEVCAQALYQGQALTARDPATREALKEAAWEETEHLAWTEKRIAELGGRKSLLNPLWYGGSLAMGITAGLLGDRWNLAFLEETEYQVEAHLNEHLATLPEQDAKSRAIVTQMRDDEHRHAETAHALGAAAMPAPVKGLMHLTSQLMKKTSYHI.

Residues Glu55, Glu85, His88, Glu137, Glu169, and His172 each coordinate Fe cation.

The protein belongs to the COQ7 family. Fe cation serves as cofactor.

The protein localises to the cell membrane. It carries out the reaction a 5-methoxy-2-methyl-3-(all-trans-polyprenyl)benzene-1,4-diol + AH2 + O2 = a 3-demethylubiquinol + A + H2O. It functions in the pathway cofactor biosynthesis; ubiquinone biosynthesis. Its function is as follows. Catalyzes the hydroxylation of 2-nonaprenyl-3-methyl-6-methoxy-1,4-benzoquinol during ubiquinone biosynthesis. The polypeptide is 3-demethoxyubiquinol 3-hydroxylase (Laribacter hongkongensis (strain HLHK9)).